The following is a 37-amino-acid chain: Cytochrome b6-f complex subunit 5 (37 aa).

A helical transmembrane segment spans residues 5–25; that stretch reads LLSGIVLGLIVVTLSGLFYAA.

It belongs to the PetG family. The 4 large subunits of the cytochrome b6-f complex are cytochrome b6, subunit IV (17 kDa polypeptide, PetD), cytochrome f and the Rieske protein, while the 4 small subunits are PetG, PetL, PetM and PetN. The complex functions as a dimer.

Its subcellular location is the cellular thylakoid membrane. In terms of biological role, component of the cytochrome b6-f complex, which mediates electron transfer between photosystem II (PSII) and photosystem I (PSI), cyclic electron flow around PSI, and state transitions. PetG is required for either the stability or assembly of the cytochrome b6-f complex. The protein is Cytochrome b6-f complex subunit 5 of Trichormus variabilis (strain ATCC 29413 / PCC 7937) (Anabaena variabilis).